The following is a 415-amino-acid chain: Multidrug resistance protein MdtA (415 aa).

The N-terminal stretch at 1-21 (MKGSYKSRWVIVIVVVIAAIA) is a signal peptide. Disordered regions lie at residues 32–60 (SRSA…GPLA) and 392–415 (EAQS…GARS). The span at 399–415 (PEEKATSREYAKKGARS) shows a compositional bias: basic and acidic residues.

Belongs to the membrane fusion protein (MFP) (TC 8.A.1) family. In terms of assembly, part of a tripartite efflux system composed of MdtA, MdtB and MdtC.

The protein localises to the cell inner membrane. Its function is as follows. The MdtABC tripartite complex confers resistance against novobiocin and deoxycholate. This is Multidrug resistance protein MdtA from Escherichia coli (strain K12 / MC4100 / BW2952).